Consider the following 421-residue polypeptide: Imidazolonepropionase (421 aa).

Fe(3+) is bound by residues histidine 81 and histidine 83. Residues histidine 81 and histidine 83 each contribute to the Zn(2+) site. Residues arginine 90, tyrosine 153, and histidine 186 each coordinate 4-imidazolone-5-propanoate. Residue tyrosine 153 coordinates N-formimidoyl-L-glutamate. Position 251 (histidine 251) interacts with Fe(3+). Histidine 251 serves as a coordination point for Zn(2+). Glutamate 254 is a binding site for 4-imidazolone-5-propanoate. Aspartate 326 lines the Fe(3+) pocket. Aspartate 326 serves as a coordination point for Zn(2+). N-formimidoyl-L-glutamate-binding residues include asparagine 328 and glycine 330. 4-imidazolone-5-propanoate is bound at residue serine 331.

Belongs to the metallo-dependent hydrolases superfamily. HutI family. Zn(2+) is required as a cofactor. Fe(3+) serves as cofactor.

The protein resides in the cytoplasm. The enzyme catalyses 4-imidazolone-5-propanoate + H2O = N-formimidoyl-L-glutamate. Its pathway is amino-acid degradation; L-histidine degradation into L-glutamate; N-formimidoyl-L-glutamate from L-histidine: step 3/3. Functionally, catalyzes the hydrolytic cleavage of the carbon-nitrogen bond in imidazolone-5-propanoate to yield N-formimidoyl-L-glutamate. It is the third step in the universal histidine degradation pathway. The polypeptide is Imidazolonepropionase (Streptococcus pyogenes serotype M1).